We begin with the raw amino-acid sequence, 348 residues long: GTP 3',8-cyclase (348 aa).

The 219-residue stretch at 24 to 242 (PFGRAVTYLR…EKQFTLTDID (219 aa)) folds into the Radical SAM core domain. Arginine 33 is a GTP binding site. The [4Fe-4S] cluster site is built by cysteine 40 and cysteine 44. Tyrosine 46 lines the S-adenosyl-L-methionine pocket. Residue cysteine 47 coordinates [4Fe-4S] cluster. Arginine 82 lines the GTP pocket. Glycine 86 lines the S-adenosyl-L-methionine pocket. Threonine 115 contacts GTP. An S-adenosyl-L-methionine-binding site is contributed by serine 139. GTP is bound at residue lysine 175. Residue methionine 209 coordinates S-adenosyl-L-methionine. Cysteine 272 and cysteine 275 together coordinate [4Fe-4S] cluster. 277–279 (RVR) provides a ligand contact to GTP. A [4Fe-4S] cluster-binding site is contributed by cysteine 289.

This sequence belongs to the radical SAM superfamily. MoaA family. In terms of assembly, monomer and homodimer. [4Fe-4S] cluster serves as cofactor.

It catalyses the reaction GTP + AH2 + S-adenosyl-L-methionine = (8S)-3',8-cyclo-7,8-dihydroguanosine 5'-triphosphate + 5'-deoxyadenosine + L-methionine + A + H(+). Its pathway is cofactor biosynthesis; molybdopterin biosynthesis. Catalyzes the cyclization of GTP to (8S)-3',8-cyclo-7,8-dihydroguanosine 5'-triphosphate. The polypeptide is GTP 3',8-cyclase (Rhizobium etli (strain CIAT 652)).